Reading from the N-terminus, the 122-residue chain is Large ribosomal subunit protein uL14 (122 aa).

Belongs to the universal ribosomal protein uL14 family. Part of the 50S ribosomal subunit. Forms a cluster with proteins L3 and L19. In the 70S ribosome, L14 and L19 interact and together make contacts with the 16S rRNA in bridges B5 and B8.

Binds to 23S rRNA. Forms part of two intersubunit bridges in the 70S ribosome. The polypeptide is Large ribosomal subunit protein uL14 (Bacillus pumilus (strain SAFR-032)).